The following is a 153-amino-acid chain: Cell division protein SepF (153 aa).

The protein belongs to the SepF family. As to quaternary structure, homodimer. Interacts with FtsZ.

The protein resides in the cytoplasm. Functionally, cell division protein that is part of the divisome complex and is recruited early to the Z-ring. Probably stimulates Z-ring formation, perhaps through the cross-linking of FtsZ protofilaments. Its function overlaps with FtsA. This is Cell division protein SepF from Clostridium tetani (strain Massachusetts / E88).